We begin with the raw amino-acid sequence, 463 residues long: Aromatic amino acid transport protein AroP (463 aa).

Helical transmembrane passes span 18–38 (TMMG…GVGI), 40–60 (AAGP…VLVM), 84–104 (FGHW…IMVM), 117–137 (AWFG…FAVV), 157–177 (VAVI…WLPG), 200–220 (VAAG…VTIA), 237–257 (AVIW…TFLM), 276–296 (ILAM…IVLA), 337–357 (AVLL…WNPA), 358–378 (GLLD…WAMI), 402–422 (AHPW…ALML), and 431–451 (VYSV…TVNS).

The protein belongs to the amino acid-polyamine-organocation (APC) superfamily. Amino acid transporter (AAT) (TC 2.A.3.1) family.

It localises to the cell membrane. It catalyses the reaction L-phenylalanine(in) + H(+)(in) = L-phenylalanine(out) + H(+)(out). The catalysed reaction is L-tryptophan(in) + H(+)(in) = L-tryptophan(out) + H(+)(out). The enzyme catalyses L-tyrosine(in) + H(+)(in) = L-tyrosine(out) + H(+)(out). Permease that is involved in the active transport across the cytoplasmic membrane of all three aromatic amino acids, phenylalanine, tyrosine and tryptophan. The chain is Aromatic amino acid transport protein AroP from Corynebacterium glutamicum (strain ATCC 13032 / DSM 20300 / JCM 1318 / BCRC 11384 / CCUG 27702 / LMG 3730 / NBRC 12168 / NCIMB 10025 / NRRL B-2784 / 534).